A 94-amino-acid chain; its full sequence is Pyrimidine/purine nucleoside phosphorylase 2 (94 aa).

It belongs to the nucleoside phosphorylase PpnP family.

It catalyses the reaction a purine D-ribonucleoside + phosphate = a purine nucleobase + alpha-D-ribose 1-phosphate. The enzyme catalyses adenosine + phosphate = alpha-D-ribose 1-phosphate + adenine. The catalysed reaction is cytidine + phosphate = cytosine + alpha-D-ribose 1-phosphate. It carries out the reaction guanosine + phosphate = alpha-D-ribose 1-phosphate + guanine. It catalyses the reaction inosine + phosphate = alpha-D-ribose 1-phosphate + hypoxanthine. The enzyme catalyses thymidine + phosphate = 2-deoxy-alpha-D-ribose 1-phosphate + thymine. The catalysed reaction is uridine + phosphate = alpha-D-ribose 1-phosphate + uracil. It carries out the reaction xanthosine + phosphate = alpha-D-ribose 1-phosphate + xanthine. In terms of biological role, catalyzes the phosphorolysis of diverse nucleosides, yielding D-ribose 1-phosphate and the respective free bases. Can use uridine, adenosine, guanosine, cytidine, thymidine, inosine and xanthosine as substrates. Also catalyzes the reverse reactions. The chain is Pyrimidine/purine nucleoside phosphorylase 2 from Psychrobacter cryohalolentis (strain ATCC BAA-1226 / DSM 17306 / VKM B-2378 / K5).